A 153-amino-acid chain; its full sequence is RNA-binding protein OPG065 (153 aa).

The Z-binding domain maps to 1-33 (MEKREVNKALYDLQRSAMVYSSNDTPPRWSTTM). The segment covering 22–34 (SNDTPPRWSTTMD) has biased composition (polar residues). Residues 22-44 (SNDTPPRWSTTMDADTRPTDSDA) form a disordered region. The 68-residue stretch at 80 to 147 (NPVTVINEYC…AKLAVDKLLS (68 aa)) folds into the DRBM domain.

Belongs to the orthopoxvirus OPG065 family. Interacts with host G1P2/ISG15. Interacts with host EIF2AK2/PKR. Interacts with host ZBP1.

RNA-binding protein that plays a role in the inhibition of multiple cellular antiviral responses activated by double-stranded RNA (dsRNA), such as inhibition of PKR activation, necroptosis, and IFN-mediated antiviral activities. Recognizes and binds Z-RNA structures via its Z-binding domain and dsRNA via its DRBM domain: RNA-binding activity is required to escape host ZBP1-dependent necroptosis. Mechanistically, the Z-binding domain binds Z-RNAs that are produced during vaccinia virus infection, thereby competing with Z-RNA detection by host ZBP1, suppressing ZBP1-dependent necroptosis. Acts as a key inhibitor of the interferon response by blocking the phosphorylation and subsequent activation of IRF3 and IRF7 kinases that are required for interferon-alpha gene expression. Inhibits NF-kappa-B activation and the ubiquitin-like protein ISG15, which is an early antiviral protein. The binding with host ISG15 subsequently blocks host ISGylation. The chain is RNA-binding protein OPG065 (OPG065) from Monkeypox virus.